A 192-amino-acid chain; its full sequence is Ion-translocating oxidoreductase complex subunit A (192 aa).

A run of 6 helical transmembrane segments spans residues 5 to 25 (ILLI…FLGL), 39 to 59 (VGMG…AYLV), 63 to 83 (ILIP…VIAV), 102 to 122 (LLGI…VALL), 134 to 154 (VVYG…FAAL), and 171 to 191 (AIAL…TGLV).

The protein belongs to the NqrDE/RnfAE family. In terms of assembly, the complex is composed of six subunits: RnfA, RnfB, RnfC, RnfD, RnfE and RnfG.

It localises to the cell inner membrane. Its function is as follows. Part of a membrane-bound complex that couples electron transfer with translocation of ions across the membrane. The polypeptide is Ion-translocating oxidoreductase complex subunit A (Haemophilus influenzae (strain 86-028NP)).